A 1012-amino-acid polypeptide reads, in one-letter code: Klotho (1012 aa).

A signal peptide spans 1-33; it reads MPASAPPRRPRPPPPSLSLLLVLLGLGGRRLRA. At 34 to 981 the chain is on the extracellular side; it reads EPGDGAQTWA…ECSFFHTRKS (948 aa). Glycosyl hydrolase-1 stretches follow at residues 57–506 and 515–953; these read FQGT…KNGF and LEGT…SNGF. Residues Asn106, Asn159, Asn283, Asn344, Asn607, Asn612, and Asn694 are each glycosylated (N-linked (GlcNAc...) asparagine). The helical transmembrane segment at 982–1002 threads the bilayer; that stretch reads LLAFIAFLFFASIISLSLIFY. Residues 1003-1012 lie on the Cytoplasmic side of the membrane; the sequence is YSKKGRRSYK.

The protein belongs to the glycosyl hydrolase 1 family. Klotho subfamily. Homodimer. Interacts with FGF23 and FGFR1. N-glycosylated. As to expression, present in cortical renal tubules (at protein level). Soluble peptide is present in serum and cerebrospinal fluid. Expressed in kidney, placenta, small intestine and prostate. Down-regulated in renal cell carcinomas, hepatocellular carcinomas, and in chronic renal failure kidney.

The protein resides in the cell membrane. It is found in the apical cell membrane. Its subcellular location is the secreted. The catalysed reaction is a beta-D-glucuronoside + H2O = D-glucuronate + an alcohol. In terms of biological role, may have weak glycosidase activity towards glucuronylated steroids. However, it lacks essential active site Glu residues at positions 239 and 872, suggesting it may be inactive as a glycosidase in vivo. May be involved in the regulation of calcium and phosphorus homeostasis by inhibiting the synthesis of active vitamin D. Essential factor for the specific interaction between FGF23 and FGFR1. Functionally, the Klotho peptide generated by cleavage of the membrane-bound isoform may be an anti-aging circulating hormone which would extend life span by inhibiting insulin/IGF1 signaling. The polypeptide is Klotho (KL) (Homo sapiens (Human)).